Consider the following 235-residue polypeptide: MRVGVIGAMEQEVKLLREQIENCEIVSRGGCEIYTGKINGVDVALLKSGIGKVAAAIGTTLLLEHFRPDVVINTGSAGGLDAKLNVGDIVVSTEVRYHDADVTAFGYEPGQMAQCPPAFIADPKLVNIAQECIGSLKLNAVRGLICSGDAFINGAEPLARIRRTFPEVVAVEMESTAIGHVCHQFDTPFVVVRAISDVADKESHLSFDEFLSVAAQQSSLMVTTMLDKLKTETQF.

Catalysis depends on Glu-12, which acts as the Proton acceptor. Substrate is bound by residues Gly-78, Ile-152, and Met-173–Glu-174. Asp-197 (proton donor) is an active-site residue.

This sequence belongs to the PNP/UDP phosphorylase family. MtnN subfamily. As to quaternary structure, homodimer.

The enzyme catalyses S-adenosyl-L-homocysteine + H2O = S-(5-deoxy-D-ribos-5-yl)-L-homocysteine + adenine. It carries out the reaction S-methyl-5'-thioadenosine + H2O = 5-(methylsulfanyl)-D-ribose + adenine. It catalyses the reaction 5'-deoxyadenosine + H2O = 5-deoxy-D-ribose + adenine. It participates in amino-acid biosynthesis; L-methionine biosynthesis via salvage pathway; S-methyl-5-thio-alpha-D-ribose 1-phosphate from S-methyl-5'-thioadenosine (hydrolase route): step 1/2. Functionally, catalyzes the irreversible cleavage of the glycosidic bond in both 5'-methylthioadenosine (MTA) and S-adenosylhomocysteine (SAH/AdoHcy) to adenine and the corresponding thioribose, 5'-methylthioribose and S-ribosylhomocysteine, respectively. Also cleaves 5'-deoxyadenosine, a toxic by-product of radical S-adenosylmethionine (SAM) enzymes, into 5-deoxyribose and adenine. Thus, is required for in vivo function of the radical SAM enzymes biotin synthase and lipoic acid synthase, that are inhibited by 5'-deoxyadenosine accumulation. The chain is 5'-methylthioadenosine/S-adenosylhomocysteine nucleosidase from Proteus mirabilis (strain HI4320).